We begin with the raw amino-acid sequence, 317 residues long: Ferrochelatase (317 aa).

Residues His-184 and Glu-259 each coordinate Fe cation.

The protein belongs to the ferrochelatase family.

The protein resides in the cytoplasm. It carries out the reaction heme b + 2 H(+) = protoporphyrin IX + Fe(2+). The protein operates within porphyrin-containing compound metabolism; protoheme biosynthesis; protoheme from protoporphyrin-IX: step 1/1. Catalyzes the ferrous insertion into protoporphyrin IX. This is Ferrochelatase from Chlamydia muridarum (strain MoPn / Nigg).